The chain runs to 98 residues: MQFTTTTLIAILSALAVASPIEPRQNATAQQERLCTSAIDTAMCCQTTLAGVINQTCTTPAITPINKQAFRAYCAAQGQDSSCCKTPLVGDGVICTPP.

The N-terminal stretch at 1–18 (MQFTTTTLIAILSALAVA) is a signal peptide. N-linked (GlcNAc...) asparagine glycans are attached at residues asparagine 26 and asparagine 54. 4 cysteine pairs are disulfide-bonded: cysteine 35–cysteine 83, cysteine 44–cysteine 74, cysteine 45–cysteine 57, and cysteine 84–cysteine 95.

It belongs to the cerato-ulmin hydrophobin family.

It localises to the secreted. It is found in the cell wall. Aerial growth, conidiation, and dispersal of filamentous fungi in the environment rely upon a capability of their secreting small amphipathic proteins called hydrophobins (HPBs) with low sequence identity. Class I can self-assemble into an outermost layer of rodlet bundles on aerial cell surfaces, conferring cellular hydrophobicity that supports fungal growth, development and dispersal; whereas Class II form highly ordered films at water-air interfaces through intermolecular interactions but contribute nothing to the rodlet structure. In Botryotinia fuckeliana, hydrophobins are not involved in conferring surface hydrophobicity to conidia and aerial hyphae and their function in sclerotia and fruiting bodies remains to be investigated. This Botryotinia fuckeliana (strain B05.10) (Noble rot fungus) protein is Class II hydrophobin 3.